Reading from the N-terminus, the 213-residue chain is Adenylate kinase (213 aa).

Position 10-15 (G10–T15) interacts with ATP. The NMP stretch occupies residues A30–I59. AMP contacts are provided by residues R36, A57 to I59, G85 to R88, and Q92. The tract at residues G123 to D161 is LID. ATP is bound at residue R124. 2 residues coordinate Zn(2+): C127 and C130. I133–Y134 lines the ATP pocket. Zn(2+) contacts are provided by C147 and C150. Positions 158 and 169 each coordinate AMP. Residue K197 coordinates ATP.

This sequence belongs to the adenylate kinase family. In terms of assembly, monomer.

The protein resides in the cytoplasm. It catalyses the reaction AMP + ATP = 2 ADP. Its pathway is purine metabolism; AMP biosynthesis via salvage pathway; AMP from ADP: step 1/1. Functionally, catalyzes the reversible transfer of the terminal phosphate group between ATP and AMP. Plays an important role in cellular energy homeostasis and in adenine nucleotide metabolism. This is Adenylate kinase from Rickettsia prowazekii (strain Madrid E).